Here is a 536-residue protein sequence, read N- to C-terminus: Phosphoenolpyruvate carboxykinase (ATP) (536 aa).

Substrate-binding residues include arginine 61, tyrosine 195, and lysine 201. Residues lysine 201, histidine 220, and 236 to 244 (GLSGTGKTT) contribute to the ATP site. Mn(2+) is bound by residues lysine 201 and histidine 220. Aspartate 257 contributes to the Mn(2+) binding site. Glutamate 285, arginine 322, and threonine 447 together coordinate ATP. A substrate-binding site is contributed by arginine 322.

It belongs to the phosphoenolpyruvate carboxykinase (ATP) family. Mn(2+) is required as a cofactor.

It localises to the cytoplasm. The catalysed reaction is oxaloacetate + ATP = phosphoenolpyruvate + ADP + CO2. It participates in carbohydrate biosynthesis; gluconeogenesis. In terms of biological role, involved in the gluconeogenesis. Catalyzes the conversion of oxaloacetate (OAA) to phosphoenolpyruvate (PEP) through direct phosphoryl transfer between the nucleoside triphosphate and OAA. The sequence is that of Phosphoenolpyruvate carboxykinase (ATP) from Brucella anthropi (strain ATCC 49188 / DSM 6882 / CCUG 24695 / JCM 21032 / LMG 3331 / NBRC 15819 / NCTC 12168 / Alc 37) (Ochrobactrum anthropi).